The primary structure comprises 384 residues: Dual-specificity RNA methyltransferase RlmN (384 aa).

Catalysis depends on glutamate 105, which acts as the Proton acceptor. Residues 111 to 350 (EVDRATLCVS…TIVRKTRGDD (240 aa)) enclose the Radical SAM core domain. Cysteine 118 and cysteine 355 are oxidised to a cystine. Cysteine 125, cysteine 129, and cysteine 132 together coordinate [4Fe-4S] cluster. Residues 179–180 (GE), serine 211, 233–235 (SLH), and asparagine 312 contribute to the S-adenosyl-L-methionine site. The S-methylcysteine intermediate role is filled by cysteine 355.

The protein belongs to the radical SAM superfamily. RlmN family. [4Fe-4S] cluster is required as a cofactor.

The protein resides in the cytoplasm. It carries out the reaction adenosine(2503) in 23S rRNA + 2 reduced [2Fe-2S]-[ferredoxin] + 2 S-adenosyl-L-methionine = 2-methyladenosine(2503) in 23S rRNA + 5'-deoxyadenosine + L-methionine + 2 oxidized [2Fe-2S]-[ferredoxin] + S-adenosyl-L-homocysteine. It catalyses the reaction adenosine(37) in tRNA + 2 reduced [2Fe-2S]-[ferredoxin] + 2 S-adenosyl-L-methionine = 2-methyladenosine(37) in tRNA + 5'-deoxyadenosine + L-methionine + 2 oxidized [2Fe-2S]-[ferredoxin] + S-adenosyl-L-homocysteine. Its function is as follows. Specifically methylates position 2 of adenine 2503 in 23S rRNA and position 2 of adenine 37 in tRNAs. m2A2503 modification seems to play a crucial role in the proofreading step occurring at the peptidyl transferase center and thus would serve to optimize ribosomal fidelity. The sequence is that of Dual-specificity RNA methyltransferase RlmN from Escherichia coli O9:H4 (strain HS).